Consider the following 242-residue polypeptide: Exosome complex component ski6 (242 aa).

This sequence belongs to the RNase PH family. In terms of assembly, component of the RNA exosome complex. Specifically part of the catalytically inactive RNA exosome core complex (Exo-9) which may associate with the catalytic subunits rrp6 and dis3 in cytoplasmic- and nuclear-specific RNA exosome complex forms. Exo-9 is formed by a hexameric base ring of RNase PH domain-containing subunits and a cap ring consisting of csl4, rrp4 and rrp40.

Its subcellular location is the cytoplasm. It localises to the nucleus. It is found in the nucleolus. Its function is as follows. Non-catalytic component of the RNA exosome complex which has 3'-&gt;5' exoribonuclease activity and participates in a multitude of cellular RNA processing and degradation events. In the nucleus, the RNA exosome complex is involved in proper maturation of stable RNA species such as rRNA, snRNA and snoRNA, in the elimination of RNA processing by-products and non-coding 'pervasive' transcripts, such as antisense RNA species and cryptic unstable transcripts (CUTs), and of mRNAs with processing defects, thereby limiting or excluding their export to the cytoplasm. In the cytoplasm, the RNA exosome complex is involved in general mRNA turnover and in RNA surveillance pathways, preventing translation of aberrant mRNAs. The catalytic inactive RNA exosome core complex of 9 subunits (Exo-9) is proposed to play a pivotal role in the binding and presentation of RNA for ribonucleolysis, and to serve as a scaffold for the association with catalytic subunits and accessory proteins or complexes. ski6 is part of the hexameric ring of RNase PH domain-containing subunits proposed to form a central channel which threads RNA substrates for degradation. This is Exosome complex component ski6 (ski6) from Schizosaccharomyces pombe (strain 972 / ATCC 24843) (Fission yeast).